Consider the following 403-residue polypeptide: NADH-quinone oxidoreductase subunit D (403 aa).

This sequence belongs to the complex I 49 kDa subunit family. As to quaternary structure, NDH-1 is composed of 14 different subunits. Subunits NuoB, C, D, E, F, and G constitute the peripheral sector of the complex.

The protein localises to the cell inner membrane. It carries out the reaction a quinone + NADH + 5 H(+)(in) = a quinol + NAD(+) + 4 H(+)(out). Its function is as follows. NDH-1 shuttles electrons from NADH, via FMN and iron-sulfur (Fe-S) centers, to quinones in the respiratory chain. The immediate electron acceptor for the enzyme in this species is believed to be ubiquinone. Couples the redox reaction to proton translocation (for every two electrons transferred, four hydrogen ions are translocated across the cytoplasmic membrane), and thus conserves the redox energy in a proton gradient. The sequence is that of NADH-quinone oxidoreductase subunit D from Erythrobacter litoralis (strain HTCC2594).